The following is a 377-amino-acid chain: Tubulin--tyrosine ligase (377 aa).

The TTL domain occupies 3 to 370; it reads TFVVRDENSS…PPDVEQPQTQ (368 aa).

This sequence belongs to the tubulin--tyrosine ligase family. In terms of assembly, monomer. Requires Mg(2+) as cofactor. The cofactor is K(+).

It carries out the reaction C-terminal L-alpha-aminoacyl-L-glutamyl-L-glutamyl-[tubulin] + L-tyrosine + ATP = C-terminal L-alpha-aminoacyl-L-glutamyl-L-glutamyl-L-tyrosyl-[tubulin] + ADP + phosphate + H(+). Its function is as follows. Catalyzes the post-translational addition of a tyrosine to the C-terminal end of detyrosinated alpha-tubulin. The protein is Tubulin--tyrosine ligase (TTL) of Homo sapiens (Human).